Reading from the N-terminus, the 328-residue chain is Malate dehydrogenase (328 aa).

11–17 (GAAGQIG) contacts NAD(+). Residues arginine 92 and arginine 98 each contribute to the substrate site. NAD(+)-binding positions include asparagine 105, glutamine 112, and 129 to 131 (VGN). The substrate site is built by asparagine 131 and arginine 162. Histidine 187 (proton acceptor) is an active-site residue.

It belongs to the LDH/MDH superfamily. MDH type 2 family.

The enzyme catalyses (S)-malate + NAD(+) = oxaloacetate + NADH + H(+). Catalyzes the reversible oxidation of malate to oxaloacetate. The polypeptide is Malate dehydrogenase (Coxiella burnetii (strain CbuG_Q212) (Coxiella burnetii (strain Q212))).